The following is a 300-amino-acid chain: Ribosomal RNA small subunit methyltransferase A (300 aa).

S-adenosyl-L-methionine is bound by residues N36, V38, G63, E84, D113, and N131.

This sequence belongs to the class I-like SAM-binding methyltransferase superfamily. rRNA adenine N(6)-methyltransferase family. RsmA subfamily.

The protein resides in the cytoplasm. The catalysed reaction is adenosine(1518)/adenosine(1519) in 16S rRNA + 4 S-adenosyl-L-methionine = N(6)-dimethyladenosine(1518)/N(6)-dimethyladenosine(1519) in 16S rRNA + 4 S-adenosyl-L-homocysteine + 4 H(+). Its function is as follows. Specifically dimethylates two adjacent adenosines (A1518 and A1519) in the loop of a conserved hairpin near the 3'-end of 16S rRNA in the 30S particle. May play a critical role in biogenesis of 30S subunits. The chain is Ribosomal RNA small subunit methyltransferase A from Kineococcus radiotolerans (strain ATCC BAA-149 / DSM 14245 / SRS30216).